Consider the following 459-residue polypeptide: Cysteine--tRNA ligase (459 aa).

Cys28 lines the Zn(2+) pocket. Positions 30–40 (VTIYDLCHIGH) match the 'HIGH' region motif. Residues Cys209, His234, and Glu238 each contribute to the Zn(2+) site. Positions 266–270 (KMSKS) match the 'KMSKS' region motif. Lys269 is an ATP binding site.

It belongs to the class-I aminoacyl-tRNA synthetase family. As to quaternary structure, monomer. Requires Zn(2+) as cofactor.

It is found in the cytoplasm. It catalyses the reaction tRNA(Cys) + L-cysteine + ATP = L-cysteinyl-tRNA(Cys) + AMP + diphosphate. The protein is Cysteine--tRNA ligase of Shewanella baltica (strain OS223).